Here is a 459-residue protein sequence, read N- to C-terminus: Phosphoglucosamine mutase (459 aa).

Catalysis depends on Ser-100, which acts as the Phosphoserine intermediate. The Mg(2+) site is built by Ser-100, Asp-256, Asp-258, and Asp-260. Ser-100 carries the phosphoserine modification.

The protein belongs to the phosphohexose mutase family. Mg(2+) serves as cofactor. In terms of processing, activated by phosphorylation.

The enzyme catalyses alpha-D-glucosamine 1-phosphate = D-glucosamine 6-phosphate. Functionally, catalyzes the conversion of glucosamine-6-phosphate to glucosamine-1-phosphate. The chain is Phosphoglucosamine mutase from Heliobacterium modesticaldum (strain ATCC 51547 / Ice1).